Consider the following 111-residue polypeptide: UPF0122 protein CKR_1296 (111 aa).

Belongs to the UPF0122 family.

Might take part in the signal recognition particle (SRP) pathway. This is inferred from the conservation of its genetic proximity to ftsY/ffh. May be a regulatory protein. This Clostridium kluyveri (strain NBRC 12016) protein is UPF0122 protein CKR_1296.